Consider the following 286-residue polypeptide: Prohibitin-2, mitochondrial (286 aa).

The Mitochondrial matrix segment spans residues 1–13 (MSFNKVPNIPGAP). Residues 14–32 (ALSALLKVSVIGGLGVYAL) form a helical; Signal-anchor for type II membrane protein membrane-spanning segment. Residues 33-286 (TNSLYNVDGG…LQEMNLEPKK (254 aa)) lie on the Mitochondrial intermembrane side of the membrane. A coiled-coil region spans residues 186 to 219 (KEFTAAIEAKQVAAQEAERAKFIVEKAEQDRRSA).

It belongs to the prohibitin family. Component of a prohibitin multimeric complex in mitochondrial membranes. Mostly expressed in proliferative tissues, including vasculature, shoot and root apical tissues.

It localises to the mitochondrion inner membrane. Prohibitin probably acts as a holdase/unfoldase for the stabilization of newly synthesized mitochondrial proteins. The chain is Prohibitin-2, mitochondrial (PHB2) from Arabidopsis thaliana (Mouse-ear cress).